A 132-amino-acid chain; its full sequence is DNA-directed RNA polymerase subunit omega (132 aa).

This sequence belongs to the RNA polymerase subunit omega family. In terms of assembly, the RNAP catalytic core consists of 2 alpha, 1 beta, 1 beta' and 1 omega subunit. When a sigma factor is associated with the core the holoenzyme is formed, which can initiate transcription.

The catalysed reaction is RNA(n) + a ribonucleoside 5'-triphosphate = RNA(n+1) + diphosphate. Functionally, promotes RNA polymerase assembly. Latches the N- and C-terminal regions of the beta' subunit thereby facilitating its interaction with the beta and alpha subunits. In Bartonella quintana (strain Toulouse) (Rochalimaea quintana), this protein is DNA-directed RNA polymerase subunit omega.